A 153-amino-acid polypeptide reads, in one-letter code: Movement protein TGB3 (153 aa).

Residues 1 to 50 (MEAPAITHSSGCVCSDCQWSGSPTVDTKVYLGSGTHANTTKTRETSFLSV) lie on the Cytoplasmic side of the membrane. Residues 51-71 (LNDNAWLFVIAALILCLYFII) form a helical membrane-spanning segment. Residues 72–127 (SKPHVDAVYTEFHQDLNGFSMKLAPGVPIDPKVIAAVKNWQKYPFGTDPRENMVTS) lie on the Lumenal side of the membrane. Residues 128–148 (IVSGLRHSFCILLLVVVLLVY) traverse the membrane as a helical segment. The Cytoplasmic portion of the chain corresponds to 149 to 153 (VCHKP).

It belongs to the virgaviridae TGB3 movement protein family. As to quaternary structure, interacts with movement proteins TGB1 and TGB2. TGB1-TGB3-TGB2 complex formation is enhanced by ATP hydrolysis.

The protein localises to the host cell junction. Its subcellular location is the host plasmodesma. It is found in the host endoplasmic reticulum membrane. It localises to the host cytoplasm. The protein resides in the host cytoskeleton. Functionally, participates in the transport of viral genome to neighboring plant cells directly through plasmodesmata, without any budding. TGBp2 and TGBp3 are necessary for intracellular delivery of TGBp1-containing vRNPs to plasmodesmata. Can gate plasmodesmata and increase their size exclusion limit. Induces host actin cytoskeleton network thickening, which probably plays a major role in virus cell-to-cell movement. This is Movement protein TGB3 from Arachis hypogaea (Peanut).